A 94-amino-acid polypeptide reads, in one-letter code: Large ribosomal subunit protein bL25 (94 aa).

It belongs to the bacterial ribosomal protein bL25 family. Part of the 50S ribosomal subunit; part of the 5S rRNA/L5/L18/L25 subcomplex. Contacts the 5S rRNA. Binds to the 5S rRNA independently of L5 and L18.

In terms of biological role, this is one of the proteins that binds to the 5S RNA in the ribosome where it forms part of the central protuberance. This Escherichia coli O6:K15:H31 (strain 536 / UPEC) protein is Large ribosomal subunit protein bL25.